A 206-amino-acid chain; its full sequence is Uridine kinase (206 aa).

11–18 (GGTGSGKS) contacts ATP.

Belongs to the uridine kinase family.

Its subcellular location is the cytoplasm. It catalyses the reaction uridine + ATP = UMP + ADP + H(+). It carries out the reaction cytidine + ATP = CMP + ADP + H(+). It participates in pyrimidine metabolism; CTP biosynthesis via salvage pathway; CTP from cytidine: step 1/3. The protein operates within pyrimidine metabolism; UMP biosynthesis via salvage pathway; UMP from uridine: step 1/1. This is Uridine kinase from Clostridium botulinum (strain Langeland / NCTC 10281 / Type F).